We begin with the raw amino-acid sequence, 325 residues long: Undecaprenyl-phosphate 4-deoxy-4-formamido-L-arabinose transferase (325 aa).

The next 2 helical transmembrane spans lie at 236-256 (LSIFGSVVALLGFAFAVLLIL) and 270-290 (VFTLFAVLFIFIGAQFVGMGL).

Belongs to the glycosyltransferase 2 family.

Its subcellular location is the cell inner membrane. The enzyme catalyses UDP-4-deoxy-4-formamido-beta-L-arabinose + di-trans,octa-cis-undecaprenyl phosphate = 4-deoxy-4-formamido-alpha-L-arabinopyranosyl di-trans,octa-cis-undecaprenyl phosphate + UDP. It functions in the pathway glycolipid biosynthesis; 4-amino-4-deoxy-alpha-L-arabinose undecaprenyl phosphate biosynthesis; 4-amino-4-deoxy-alpha-L-arabinose undecaprenyl phosphate from UDP-4-deoxy-4-formamido-beta-L-arabinose and undecaprenyl phosphate: step 1/2. The protein operates within bacterial outer membrane biogenesis; lipopolysaccharide biosynthesis. Functionally, catalyzes the transfer of 4-deoxy-4-formamido-L-arabinose from UDP to undecaprenyl phosphate. The modified arabinose is attached to lipid A and is required for resistance to polymyxin and cationic antimicrobial peptides. The sequence is that of Undecaprenyl-phosphate 4-deoxy-4-formamido-L-arabinose transferase from Edwardsiella ictaluri (strain 93-146).